We begin with the raw amino-acid sequence, 466 residues long: Asparagine--tRNA ligase (466 aa).

Belongs to the class-II aminoacyl-tRNA synthetase family. Homodimer.

The protein localises to the cytoplasm. It catalyses the reaction tRNA(Asn) + L-asparagine + ATP = L-asparaginyl-tRNA(Asn) + AMP + diphosphate + H(+). This is Asparagine--tRNA ligase from Vibrio vulnificus (strain YJ016).